Reading from the N-terminus, the 348-residue chain is Probable purine nucleoside permease C285.05 (348 aa).

The N-terminal stretch at 1-21 is a signal peptide; the sequence is MLFLKLVASVLALMTIVPAQA.

Belongs to the NUP family.

It localises to the endoplasmic reticulum. In terms of biological role, probable nucleoside permease that transports adenosine and guanosine. This is Probable purine nucleoside permease C285.05 from Schizosaccharomyces pombe (strain 972 / ATCC 24843) (Fission yeast).